We begin with the raw amino-acid sequence, 213 residues long: Histidine biosynthesis bifunctional protein HisIE (213 aa).

The phosphoribosyl-AMP cyclohydrolase stretch occupies residues 1–114; sequence MLTTEKYQGL…FHPALTDFSF (114 aa). The interval 115–213 is phosphoribosyl-ATP pyrophosphohydrolase; the sequence is LFQLENIISI…RVRSKLKKKH (99 aa).

In the N-terminal section; belongs to the PRA-CH family. This sequence in the C-terminal section; belongs to the PRA-PH family.

It is found in the cytoplasm. It carries out the reaction 1-(5-phospho-beta-D-ribosyl)-ATP + H2O = 1-(5-phospho-beta-D-ribosyl)-5'-AMP + diphosphate + H(+). It catalyses the reaction 1-(5-phospho-beta-D-ribosyl)-5'-AMP + H2O = 1-(5-phospho-beta-D-ribosyl)-5-[(5-phospho-beta-D-ribosylamino)methylideneamino]imidazole-4-carboxamide. The protein operates within amino-acid biosynthesis; L-histidine biosynthesis; L-histidine from 5-phospho-alpha-D-ribose 1-diphosphate: step 2/9. It participates in amino-acid biosynthesis; L-histidine biosynthesis; L-histidine from 5-phospho-alpha-D-ribose 1-diphosphate: step 3/9. This Blochmanniella floridana protein is Histidine biosynthesis bifunctional protein HisIE.